Here is a 208-residue protein sequence, read N- to C-terminus: High frequency lysogenization protein HflD homolog (208 aa).

Belongs to the HflD family.

Its subcellular location is the cytoplasm. The protein localises to the cell inner membrane. The sequence is that of High frequency lysogenization protein HflD homolog from Pseudomonas putida (strain ATCC 700007 / DSM 6899 / JCM 31910 / BCRC 17059 / LMG 24140 / F1).